The primary structure comprises 359 residues: MQGNYKALWLNDDLFDECLEVIDQRLLPFIYDTRHLTTTEEVVTAIKNMTVRGAGVIGSVAAFGIYIAAMEVEGDYELLKEKALLIRESRPTAINLMWAVDKMMELLSASANLIEDARSFAIELNDAEALESQKIAEFGCEIIEEILKQKNKTRINILTHCNAGWLAVIDEGTALAPIYEAKRRGIDVHVWVDETRPRNQGASLTAWELSKEGIEHTIIADNMGGLLMQRGEVDMVIVGADRVSANGDVANKIGTYLKALAAHDNGVPFYVAIPASTFDFEIKDGVKEIPIEERSGDEVKFIRGVDEDGVLRRVRITPEDSPTKNYGFDVTPARLISALITNKGVCRANFDEIKEKFRG.

Substrate-binding positions include 52 to 54 (RGA), R90, and Q200. The active-site Proton donor is the D241. 251–252 (NK) is a binding site for substrate.

It belongs to the eIF-2B alpha/beta/delta subunits family. MtnA subfamily.

The catalysed reaction is 5-(methylsulfanyl)-alpha-D-ribose 1-phosphate = 5-(methylsulfanyl)-D-ribulose 1-phosphate. It functions in the pathway amino-acid biosynthesis; L-methionine biosynthesis via salvage pathway; L-methionine from S-methyl-5-thio-alpha-D-ribose 1-phosphate: step 1/6. Its function is as follows. Catalyzes the interconversion of methylthioribose-1-phosphate (MTR-1-P) into methylthioribulose-1-phosphate (MTRu-1-P). The protein is Methylthioribose-1-phosphate isomerase of Sulfurimonas denitrificans (strain ATCC 33889 / DSM 1251) (Thiomicrospira denitrificans (strain ATCC 33889 / DSM 1251)).